The following is a 435-amino-acid chain: Methylenetetrahydrofolate--tRNA-(uracil-5-)-methyltransferase TrmFO (435 aa).

Position 9–14 (9–14 (GAGLAG)) interacts with FAD.

Belongs to the MnmG family. TrmFO subfamily. It depends on FAD as a cofactor.

The protein localises to the cytoplasm. It carries out the reaction uridine(54) in tRNA + (6R)-5,10-methylene-5,6,7,8-tetrahydrofolate + NADH + H(+) = 5-methyluridine(54) in tRNA + (6S)-5,6,7,8-tetrahydrofolate + NAD(+). The catalysed reaction is uridine(54) in tRNA + (6R)-5,10-methylene-5,6,7,8-tetrahydrofolate + NADPH + H(+) = 5-methyluridine(54) in tRNA + (6S)-5,6,7,8-tetrahydrofolate + NADP(+). Functionally, catalyzes the folate-dependent formation of 5-methyl-uridine at position 54 (M-5-U54) in all tRNAs. The protein is Methylenetetrahydrofolate--tRNA-(uracil-5-)-methyltransferase TrmFO of Staphylococcus aureus (strain JH1).